We begin with the raw amino-acid sequence, 404 residues long: Calcium/calmodulin-dependent protein kinase cmkB (404 aa).

Residues 18–279 form the Protein kinase domain; the sequence is YKTGKTLGAG…AHQALQHPWI (262 aa). Residues 24-32 and lysine 47 each bind ATP; that span reads LGAGLYSVV. The active-site Proton acceptor is the aspartate 141. At threonine 179 the chain carries Phosphothreonine; by cmkC. Residues 279–322 are autoinhibitory domain; the sequence is INPPYDTTDDLGSGEDLLPNIKKNFNARRTLHKAIDTVRAINKL. Residues 301–323 form a calmodulin-binding region; that stretch reads KNFNARRTLHKAIDTVRAINKLR. The tract at residues 336–404 is disordered; it reads VDPKPEHVNG…WSRTAPRSER (69 aa). 2 stretches are compositionally biased toward basic and acidic residues: residues 338-370 and 379-389; these read PKPE…DSRS and QIREQERKVKE.

The protein belongs to the protein kinase superfamily. CAMK Ser/Thr protein kinase family. CaMK subfamily. In terms of processing, phosphorylated by cmkC on Thr-179.

The enzyme catalyses L-seryl-[protein] + ATP = O-phospho-L-seryl-[protein] + ADP + H(+). The catalysed reaction is L-threonyl-[protein] + ATP = O-phospho-L-threonyl-[protein] + ADP + H(+). Activated by Ca(2+)/calmodulin. Binding of calmodulin results in conformational change that relieves intrasteric autoinhibition and allows phosphorylation of Thr-179 within the activation loop by cmkC. Its function is as follows. Calcium/calmodulin-dependent protein kinase that operates in the calcium-triggered CaMKK-CaMK1 signaling cascade. Required in G1-phase of the cell cycle for proper timing of the initial nuclear division after germination, but not for subsequent mitoses. Required for the normal temporal regulation of nimX activity. The polypeptide is Calcium/calmodulin-dependent protein kinase cmkB (Emericella nidulans (Aspergillus nidulans)).